A 448-amino-acid polypeptide reads, in one-letter code: Exodeoxyribonuclease 7 large subunit (448 aa).

The protein belongs to the XseA family. As to quaternary structure, heterooligomer composed of large and small subunits.

It localises to the cytoplasm. The catalysed reaction is Exonucleolytic cleavage in either 5'- to 3'- or 3'- to 5'-direction to yield nucleoside 5'-phosphates.. Bidirectionally degrades single-stranded DNA into large acid-insoluble oligonucleotides, which are then degraded further into small acid-soluble oligonucleotides. The protein is Exodeoxyribonuclease 7 large subunit of Histophilus somni (strain 129Pt) (Haemophilus somnus).